Here is a 530-residue protein sequence, read N- to C-terminus: Probable phosphoacetylglucosamine mutase (530 aa).

Ser62 (phosphoserine intermediate) is an active-site residue. The Mg(2+) site is built by Ser62, Asp278, Asp280, and Asp282. Substrate contacts are provided by residues 369-371 (EPN), 481-485 (RPSGT), and Arg490.

Belongs to the phosphohexose mutase family. Requires Mg(2+) as cofactor.

It catalyses the reaction N-acetyl-alpha-D-glucosamine 1-phosphate = N-acetyl-D-glucosamine 6-phosphate. It participates in nucleotide-sugar biosynthesis; UDP-N-acetyl-alpha-D-glucosamine biosynthesis; N-acetyl-alpha-D-glucosamine 1-phosphate from alpha-D-glucosamine 6-phosphate (route I): step 2/2. In terms of biological role, catalyzes the conversion of GlcNAc-6-P into GlcNAc-1-P during the synthesis of uridine diphosphate/UDP-GlcNAc, which is a biosynthetic precursor of chitin and also supplies the amino sugars for N-linked oligosaccharides of glycoproteins. This is Probable phosphoacetylglucosamine mutase from Encephalitozoon cuniculi (strain GB-M1) (Microsporidian parasite).